Consider the following 160-residue polypeptide: Transcriptional regulator MraZ (160 aa).

SpoVT-AbrB domains are found at residues 5–51 and 80–123; these read TFEK…GKAL and MAKL…EREA.

The protein belongs to the MraZ family. Forms oligomers.

The protein localises to the cytoplasm. Its subcellular location is the nucleoid. The protein is Transcriptional regulator MraZ of Phenylobacterium zucineum (strain HLK1).